The chain runs to 436 residues: Probable 4-aminobutyrate aminotransferase (436 aa).

Lysine 281 bears the N6-(pyridoxal phosphate)lysine mark.

This sequence belongs to the class-III pyridoxal-phosphate-dependent aminotransferase family. It depends on pyridoxal 5'-phosphate as a cofactor.

It carries out the reaction 4-aminobutanoate + 2-oxoglutarate = succinate semialdehyde + L-glutamate. It catalyses the reaction (S)-3-amino-2-methylpropanoate + 2-oxoglutarate = 2-methyl-3-oxopropanoate + L-glutamate. The protein operates within amino-acid degradation; 4-aminobutanoate degradation. The protein is Probable 4-aminobutyrate aminotransferase (gabT) of Bacillus subtilis (strain 168).